The primary structure comprises 359 residues: Lactosylceramide 4-alpha-galactosyltransferase (359 aa).

The Cytoplasmic portion of the chain corresponds to 1-30 (MGISCSHLEETMSKPPDCLLRMLRGTPRQR). Residues 31–51 (VFTFFIISFKFMFLISILIYW) form a helical; Signal-anchor for type II membrane protein membrane-spanning segment. Residues 52-359 (HTVGAPKDQR…TTHRAMKMYL (308 aa)) are Lumenal-facing. The DXD motif signature appears at 198–200 (DTD). N-linked (GlcNAc...) asparagine glycosylation is found at Asn-209 and Asn-315.

The protein belongs to the glycosyltransferase 32 family.

It is found in the golgi apparatus membrane. It catalyses the reaction a beta-D-Gal-(1-&gt;4)-beta-D-Glc-(1&lt;-&gt;1)-Cer(d18:1(4E)) + UDP-alpha-D-galactose = a globoside Gb3Cer (d18:1(4E)) + UDP + H(+). The enzyme catalyses a beta-D-Gal-(1&lt;-&gt;1')-ceramide + UDP-alpha-D-galactose = alpha-D-Gal-(1-&gt;4)-beta-D-Gal-(1&lt;-&gt;1')-Cer + UDP + H(+). Its pathway is glycolipid biosynthesis. In terms of biological role, catalyzes the transfer of galactose from UDP-alpha-D-galactose to lactosylceramide/beta-D-galactosyl-(1-&gt;4)-beta-D-glucosyl-(1&lt;-&gt;1)-ceramide(d18:1(4E)) to produce globotriaosylceramide/globoside Gb3Cer (d18:1(4E)). Also able to transfer galactose to galactosylceramide/beta-D-Gal-(1&lt;-&gt;1')-Cer. Globoside Gb3Cer is a glycosphingolipid of the globo serie, one of the major types of neutral root structures of glycosphingolipids, that constitute a significant portion of mammalian cell membranes. This is Lactosylceramide 4-alpha-galactosyltransferase from Mus musculus (Mouse).